A 217-amino-acid polypeptide reads, in one-letter code: GTP cyclohydrolase 1 (217 aa).

Residues Cys-109, His-112, and Cys-180 each contribute to the Zn(2+) site.

This sequence belongs to the GTP cyclohydrolase I family. Toroid-shaped homodecamer, composed of two pentamers of five dimers.

It catalyses the reaction GTP + H2O = 7,8-dihydroneopterin 3'-triphosphate + formate + H(+). Its pathway is cofactor biosynthesis; 7,8-dihydroneopterin triphosphate biosynthesis; 7,8-dihydroneopterin triphosphate from GTP: step 1/1. The polypeptide is GTP cyclohydrolase 1 (Aliivibrio fischeri (strain ATCC 700601 / ES114) (Vibrio fischeri)).